The following is a 463-amino-acid chain: D(5)-like dopamine receptor (463 aa).

At 1 to 39 (MENFYNETEPTEPRGGVDPLRVVTAAEDVPAPVGGVSVR) the chain is on the extracellular side. N-linked (GlcNAc...) asparagine glycosylation is present at Asn-6. The chain crosses the membrane as a helical span at residues 40–65 (ALTGCVLCALIVSTLLGNTLVCAAVI). Residues 66–76 (KFRHLRSKVTN) are Cytoplasmic-facing. The chain crosses the membrane as a helical span at residues 77–103 (AFVVSLAVSDLFVAVLVMPWRAVSEVA). The Extracellular portion of the chain corresponds to 104 to 112 (GVWLFGRFC). Cys-112 and Cys-194 are disulfide-bonded. Residues 113–135 (DTWVAFDIMCSTASILNLCVISM) form a helical membrane-spanning segment. At 136–154 (DRYWAISNPFRYERRMTRR) the chain is on the cytoplasmic side. A helical membrane pass occupies residues 155-180 (FAFLMIAVAWTLSVLISFIPVQLNWH). Residues 181-198 (RADNNSSAHEQGDCNASL) lie on the Extracellular side of the membrane. The helical transmembrane segment at 199-223 (NRTYAISSSLISFYIPVLIMVGTYT) threads the bilayer. Over 224–273 (RIFRIAQTQIRRISSLERAAGQRAQNQSHRASTHDESALKTSFKRETKVL) the chain is Cytoplasmic. Residues 274-301 (KTLSVIMGVFVFCWLPFFVLNCVVPFCD) form a helical membrane-spanning segment. The Extracellular segment spans residues 302–315 (VDKVGEPPCVSDTT). A helical membrane pass occupies residues 316–337 (FNIFVWFGWANSSLNPVIYAFN). Residues 338 to 463 (ADFRKAFTTI…PGQIQDLGDL (126 aa)) are Cytoplasmic-facing.

It belongs to the G-protein coupled receptor 1 family.

The protein localises to the cell membrane. Receptor for dopamine. The polypeptide is D(5)-like dopamine receptor (dl) (Takifugu rubripes (Japanese pufferfish)).